Reading from the N-terminus, the 240-residue chain is LexA repressor (240 aa).

Residues 26–46 constitute a DNA-binding region (H-T-H motif); it reads FDEMKEALDLASKSGIHRLIT. Catalysis depends on for autocatalytic cleavage activity residues S161 and K199.

This sequence belongs to the peptidase S24 family. As to quaternary structure, homodimer.

The catalysed reaction is Hydrolysis of Ala-|-Gly bond in repressor LexA.. Functionally, represses a number of genes involved in the response to DNA damage (SOS response), including recA and lexA. In the presence of single-stranded DNA, RecA interacts with LexA causing an autocatalytic cleavage which disrupts the DNA-binding part of LexA, leading to derepression of the SOS regulon and eventually DNA repair. This is LexA repressor from Brucella ovis (strain ATCC 25840 / 63/290 / NCTC 10512).